Consider the following 444-residue polypeptide: Glutamyl-tRNA reductase (444 aa).

Substrate contacts are provided by residues 49–52 (TCNR), Ser109, 114–116 (ETQ), and Gln120. The active-site Nucleophile is Cys50. 189-194 (GAGKMG) contacts NADP(+).

This sequence belongs to the glutamyl-tRNA reductase family. As to quaternary structure, homodimer.

The enzyme catalyses (S)-4-amino-5-oxopentanoate + tRNA(Glu) + NADP(+) = L-glutamyl-tRNA(Glu) + NADPH + H(+). Its pathway is porphyrin-containing compound metabolism; protoporphyrin-IX biosynthesis; 5-aminolevulinate from L-glutamyl-tRNA(Glu): step 1/2. In terms of biological role, catalyzes the NADPH-dependent reduction of glutamyl-tRNA(Glu) to glutamate 1-semialdehyde (GSA). This Bacillus cereus (strain 03BB102) protein is Glutamyl-tRNA reductase.